Reading from the N-terminus, the 361-residue chain is dTDP-glucose 4,6-dehydratase (361 aa).

Residues 11-12, 32-35, 58-59, 80-84, and threonine 99 each bind NAD(+); these read FI, DKLT, DI, and LAAES. Serine 84 contributes to the substrate binding site. Threonine 133 is a binding site for substrate. Aspartate 134 acts as the Proton donor in catalysis. Catalysis depends on proton acceptor residues glutamate 135 and tyrosine 167. 167-171 is an NAD(+) binding site; it reads YSASK. Asparagine 196 lines the substrate pocket. Asparagine 197 is an NAD(+) binding site. Substrate-binding positions include 206 to 207, 222 to 224, arginine 231, asparagine 266, and 296 to 300; these read KL, PIY, and DRPGH.

The protein belongs to the NAD(P)-dependent epimerase/dehydratase family. dTDP-glucose dehydratase subfamily. Homodimer. The cofactor is NAD(+).

It carries out the reaction dTDP-alpha-D-glucose = dTDP-4-dehydro-6-deoxy-alpha-D-glucose + H2O. Its pathway is carbohydrate biosynthesis; dTDP-L-rhamnose biosynthesis. The protein operates within bacterial outer membrane biogenesis; LPS O-antigen biosynthesis. In terms of biological role, catalyzes the dehydration of dTDP-D-glucose to form dTDP-6-deoxy-D-xylo-4-hexulose via a three-step process involving oxidation, dehydration and reduction. The chain is dTDP-glucose 4,6-dehydratase (rfbB) from Escherichia coli.